The primary structure comprises 324 residues: Serine/threonine-protein phosphatase PP1 isozyme 8 (324 aa).

Positions 66, 68, 94, and 126 each coordinate Mn(2+). H127 functions as the Proton donor in the catalytic mechanism. H175 and H250 together coordinate Mn(2+).

It belongs to the PPP phosphatase family. PP-1 subfamily. It depends on Mn(2+) as a cofactor. In terms of tissue distribution, expressed in roots, rosettes and flowers.

The protein resides in the nucleus. The protein localises to the cytoplasm. It catalyses the reaction O-phospho-L-seryl-[protein] + H2O = L-seryl-[protein] + phosphate. The enzyme catalyses O-phospho-L-threonyl-[protein] + H2O = L-threonyl-[protein] + phosphate. With respect to regulation, phosphatase activity is strongly reduced by the protein phosphatase inhibitor 2 (I-2). Its function is as follows. Serine/threonine-protein phosphatase that possesses phosphatase activity toward para-nitrophenyl phosphate (pNPP) in vitro. The chain is Serine/threonine-protein phosphatase PP1 isozyme 8 from Arabidopsis thaliana (Mouse-ear cress).